The chain runs to 158 residues: Protein shisa-like-2B (158 aa).

Residues 65 to 85 (IGALVGLGIAALVLLAFVISV) traverse the membrane as a helical segment.

It belongs to the shisa family.

Its subcellular location is the membrane. In Mus musculus (Mouse), this protein is Protein shisa-like-2B (Shisal2b).